The chain runs to 230 residues: MAHNKRLKAARASVDSTKFYPLTEAVALAKTNARAKFDETIEISLNLGIDPRHADQMVRGLVSLPNGTGKTLRVGVFARGPKAEEAKAAGADVVGAEDLAELVQNGTIEFDRCIATPDMMALVGRLGKILGPRGLMPNPKLGTVTMDVKGAVTAAKSGQIEFRAEKAGIIHAGIGKASFDADKLVENIRALVDAIQKAKPTGAKGTYLQKAALSSSMGPGMRLDVSSLTV.

It belongs to the universal ribosomal protein uL1 family. In terms of assembly, part of the 50S ribosomal subunit.

Its function is as follows. Binds directly to 23S rRNA. The L1 stalk is quite mobile in the ribosome, and is involved in E site tRNA release. Functionally, protein L1 is also a translational repressor protein, it controls the translation of the L11 operon by binding to its mRNA. This chain is Large ribosomal subunit protein uL1, found in Granulibacter bethesdensis (strain ATCC BAA-1260 / CGDNIH1).